The sequence spans 99 residues: Acylphosphatase (99 aa).

In terms of domain architecture, Acylphosphatase-like spans valine 5 to proline 97. Active-site residues include arginine 20 and asparagine 38.

Belongs to the acylphosphatase family.

The enzyme catalyses an acyl phosphate + H2O = a carboxylate + phosphate + H(+). The chain is Acylphosphatase (acyP) from Rhodopseudomonas palustris (strain BisB18).